The sequence spans 353 residues: UPF0421 protein YgaE (353 aa).

The next 4 helical transmembrane spans lie at 20–40, 67–87, 103–123, and 125–145; these read LASW…IFAI, VFGL…VIVI, LVTV…FALI, and TSTV…FLPP.

It belongs to the UPF0421 family.

The protein localises to the cell membrane. In Bacillus subtilis (strain 168), this protein is UPF0421 protein YgaE (ygaE).